The chain runs to 483 residues: MFS-type transporter ppzB (483 aa).

Helical transmembrane passes span phenylalanine 18–leucine 38, alanine 62–alanine 82, methionine 96–valine 116, isoleucine 149–valine 169, and alanine 178–isoleucine 198. Asparagine 219 carries N-linked (GlcNAc...) asparagine glycosylation. A run of 6 helical transmembrane segments spans residues leucine 281–proline 301, phenylalanine 310–glycine 330, alanine 344–glutamate 364, valine 374–proline 394, phenylalanine 424–phenylalanine 444, and valine 453–valine 473.

The protein belongs to the major facilitator superfamily. TCR/Tet family.

The protein resides in the membrane. Functionally, MFS-type transporter; part of the gene cluster that mediates the biosynthesis of pyrrolopyrazines, secondary metabolites showing insecticidal activity. Probably involved in the secretion of peramine and other pyrrolopyrazines. The polypeptide is MFS-type transporter ppzB (Metarhizium rileyi (strain RCEF 4871) (Nomuraea rileyi)).